Here is a 703-residue protein sequence, read N- to C-terminus: MAERTLVTSALPYANGPLHIGHAVEYVQTDIYVRFLRSCGRDVVYFCADDTHGTPIELNAAKQGLKPEEFIARFHEEHQRDFHDLDVRFDYFHSTNSPENRQYAELIYGRLKEKGDIERRNIEQTYCENDRRFLPDRFIKGTCPNCKASDQYGDACEKCGKAYDPTDLIDARCALCGTPPVRKHSEHLFFKLSRHEDFLQDVLRKPGFIHPGLATQLQGFFEKGLSDWDISRDGPYFGFAIPGETDKYFYVWLDAPIGYIATTEKWAKETGKAKSALDYWSADADTRIIHFIGKDIVYFHALFWPAVLNVAGFHIPSEIKVHGHLMLNGEKMSKTRGTMVPVRDYLDQLDPSYLRYFYAANLGPGVEDLDLNLKDFRQRVNGELVNNVGNLANRALSLLAGPLEKRLAPGRAEGPGRELVEAALARVPEVRDAFDKLEYRSAIRVITEIASAANGFLQTAAPWAQVKKDAEVARADLSDAADVAYLLGALLAPVTPRLSEKLFAQLGAEPLTFQALEGAKYPLLDRSRPIGTPEPLLPRLEEERVNAIIKLPEGAAAPQAAEARPAKGAKTEKKPAEAPAATQAAAPSAGAAESPGEIEYDDFAKVVLKAGKVLAAEKVQKADKLLKLTVDVGEGSPRTIVSGIAEAFAPEALTGRNVVVVANLKPRKLKGIESRGMLLTAGPGGKELSLLDPGDVAPGSEVK.

The 'HIGH' region signature appears at 12–22 (PYANGPLHIGH). Zn(2+)-binding residues include cysteine 143, cysteine 146, cysteine 156, and cysteine 159. Positions 331–335 (KMSKT) match the 'KMSKS' region motif. Position 334 (lysine 334) interacts with ATP. Composition is skewed to low complexity over residues 556–568 (AAPQAAEARPAKG) and 577–594 (EAPAATQAAAPSAGAAES). Disordered stretches follow at residues 556–594 (AAPQAAEARPAKGAKTEKKPAEAPAATQAAAPSAGAAES) and 682–703 (GPGGKELSLLDPGDVAPGSEVK). Residues 602 to 703 (DFAKVVLKAG…GDVAPGSEVK (102 aa)) form the tRNA-binding domain.

The protein belongs to the class-I aminoacyl-tRNA synthetase family. MetG type 1 subfamily. In terms of assembly, homodimer. The cofactor is Zn(2+).

The protein resides in the cytoplasm. The catalysed reaction is tRNA(Met) + L-methionine + ATP = L-methionyl-tRNA(Met) + AMP + diphosphate. Functionally, is required not only for elongation of protein synthesis but also for the initiation of all mRNA translation through initiator tRNA(fMet) aminoacylation. The chain is Methionine--tRNA ligase from Myxococcus xanthus (strain DK1622).